Consider the following 262-residue polypeptide: Flap endonuclease Xni (262 aa).

Residue aspartate 105 participates in Mg(2+) binding. Positions 162-257 (ERSQFLDLMA…FRVIDSPPEK (96 aa)) constitute a 5'-3' exonuclease domain. The K(+) site is built by leucine 172, alanine 173, proline 181, isoleucine 183, and isoleucine 186. Residues 185–190 (GIGPKS) are interaction with DNA.

Belongs to the Xni family. Requires Mg(2+) as cofactor. K(+) serves as cofactor.

In terms of biological role, has flap endonuclease activity. During DNA replication, flap endonucleases cleave the 5'-overhanging flap structure that is generated by displacement synthesis when DNA polymerase encounters the 5'-end of a downstream Okazaki fragment. The protein is Flap endonuclease Xni of Shewanella baltica (strain OS155 / ATCC BAA-1091).